A 106-amino-acid chain; its full sequence is Putative membrane protein insertion efficiency factor (106 aa).

It belongs to the UPF0161 family.

It localises to the cell inner membrane. Functionally, could be involved in insertion of integral membrane proteins into the membrane. This is Putative membrane protein insertion efficiency factor from Acinetobacter baumannii (strain SDF).